The following is a 39-amino-acid chain: Omega-theraphotoxin-Asp1a (39 aa).

Cystine bridges form between Cys-4/Cys-25, Cys-8/Cys-31, and Cys-17/Cys-36.

Expressed by the venom gland.

It localises to the secreted. Functionally, toxin that inhibits voltage-gated calcium channels in rat cerebellar granule cells (IC(50)&lt;200 nM). Is lethal to cockroaches. The protein is Omega-theraphotoxin-Asp1a of Aphonopelma sp. (American tarantula).